The chain runs to 302 residues: MFRKQNLKWLGVLATIIMTFVQLGGALVTKTGSEDGCGSSWPLCNGALLPENLPIQTIIELSHRAVSAISLIVVLWLVITAWKNIGYIKEIKPLSIISVGFLLVQALVGAAAVIWQQNPYVLALHFGISLISFSSVFLMTLIIFSIDKKYEADILFIHKPLRILTWLMAIIVYLTIYTGALVRHTKSSLAYGAWPIPFDDIVPHNAHDWVQFSHRGMALITFIWIMITFIHAIKNYSDNRTVRYGYTASFILVILQVITGALSVITNVNLIIALFHALFITYLFGMIAYFILLMLRTTRSQK.

Topologically, residues 1–8 (MFRKQNLK) are cytoplasmic. Residues 9–29 (WLGVLATIIMTFVQLGGALVT) traverse the membrane as a helical segment. Residues 30–67 (KTGSEDGCGSSWPLCNGALLPENLPIQTIIELSHRAVS) are Extracellular-facing. Cysteine 37 and cysteine 44 are disulfide-bonded. The active site involves glutamate 60. Histidine 63 provides a ligand contact to heme o. Residues 68-88 (AISLIVVLWLVITAWKNIGYI) traverse the membrane as a helical segment. The Cytoplasmic segment spans residues 89–93 (KEIKP). A helical membrane pass occupies residues 94–114 (LSIISVGFLLVQALVGAAAVI). Residues 115–125 (WQQNPYVLALH) are Extracellular-facing. Position 125 (histidine 125) interacts with heme o. The chain crosses the membrane as a helical span at residues 126–146 (FGISLISFSSVFLMTLIIFSI). Over 147 to 161 (DKKYEADILFIHKPL) the chain is Cytoplasmic. The helical transmembrane segment at 162 to 182 (RILTWLMAIIVYLTIYTGALV) threads the bilayer. The Extracellular segment spans residues 183–215 (RHTKSSLAYGAWPIPFDDIVPHNAHDWVQFSHR). Histidine 214 lines the heme b pocket. A helical transmembrane segment spans residues 216-236 (GMALITFIWIMITFIHAIKNY). The Cytoplasmic segment spans residues 237 to 244 (SDNRTVRY). The chain crosses the membrane as a helical span at residues 245-265 (GYTASFILVILQVITGALSVI). Over 266 to 270 (TNVNL) the chain is Extracellular. Residues 271–291 (IIALFHALFITYLFGMIAYFI) form a helical membrane-spanning segment. Histidine 276 is a heme b binding site. Over 292-302 (LLMLRTTRSQK) the chain is Cytoplasmic.

The protein belongs to the COX15/CtaA family. Type 1 subfamily. In terms of assembly, interacts with CtaB. It depends on heme b as a cofactor.

It localises to the cell membrane. It catalyses the reaction Fe(II)-heme o + 2 A + H2O = Fe(II)-heme a + 2 AH2. It participates in porphyrin-containing compound metabolism; heme A biosynthesis; heme A from heme O: step 1/1. Catalyzes the conversion of heme O to heme A by two successive hydroxylations of the methyl group at C8. The first hydroxylation forms heme I, the second hydroxylation results in an unstable dihydroxymethyl group, which spontaneously dehydrates, resulting in the formyl group of heme A. This is Heme A synthase from Staphylococcus epidermidis (strain ATCC 35984 / DSM 28319 / BCRC 17069 / CCUG 31568 / BM 3577 / RP62A).